Consider the following 159-residue polypeptide: Carbohydrate sulfotransferase 15 (159 aa).

The Lumenal segment spans residues 1–159 (SGTTDFYRRI…YQPHNERLVK (159 aa)). 2 N-linked (GlcNAc...) asparagine glycosylation sites follow: Asn-42 and Asn-112.

The protein belongs to the sulfotransferase 1 family. A divalent metal cation serves as cofactor. It depends on glutathione as a cofactor.

The protein localises to the golgi apparatus membrane. It catalyses the reaction dermatan 4'-sulfate + n 3'-phosphoadenylyl sulfate = dermatan 4',6'-bissulfate + n adenosine 3',5'-bisphosphate + n H(+). The catalysed reaction is chondroitin 4'-sulfate + n 3'-phosphoadenylyl sulfate = chondroitin 4',6'-bissulfate + n adenosine 3',5'-bisphosphate + n H(+). Its function is as follows. Sulfotransferase that transfers sulfate from 3'-phosphoadenosine 5'-phosphosulfate (PAPS) to the C-6 hydroxyl group of the GalNAc 4-sulfate residue of chondroitin sulfate A and forms chondroitin sulfate E containing GlcA-GalNAc(4,6-SO(4)) repeating units. In Nototodarus sloanii (Wellington flying squid), this protein is Carbohydrate sulfotransferase 15 (GALNAC4S6ST).